A 227-amino-acid polypeptide reads, in one-letter code: PKHD-type hydroxylase ABSDF3031 (227 aa).

Residues 78 to 178 form the Fe2OG dioxygenase domain; it reads KIIPPLFNRY…RFASFFWVQS (101 aa). Fe cation is bound by residues H96, D98, and H159. Position 169 (R169) interacts with 2-oxoglutarate.

It depends on Fe(2+) as a cofactor. L-ascorbate serves as cofactor.

This chain is PKHD-type hydroxylase ABSDF3031, found in Acinetobacter baumannii (strain SDF).